Reading from the N-terminus, the 404-residue chain is MIKSILDNDLYKFTMQMAVLELFPKAEAEYRFTNRGSHHFSEEFVEKLRRVIDEDISALMLTEDEYQWLGENCSFLKPMYLEYLKNFRFKPGEVEVCLTEEKELDIRIKGPWHSTILWEIVLMAAVSELYFTTIEKEWNGKEWDGNISATSESILTAYGEKILEIGKILEENGCLFAEFGTRRRRSFELHDQVMKTLLQIETLTGTSNVFFAKKYGLKPIGTVGHEWIMGTSALIGLRYANRFAFENWVEVYKGDLGIALTDTFGSEAFFKDMDLKLSKIYDGFRHDSGDPFTFVDRVIDHYRKMGIDPMKKVIVFSDALNAEAAIRLKKYCQDKINCSFGIGTSLTNNSEFFRESPPLNMVIKLHSVNGIPVVKLSDSPEKETGERDALRVANYIVGRKGLDE.

Position 225 is a phosphohistidine; by autocatalysis (H225).

The protein belongs to the NAPRTase family. In terms of processing, transiently phosphorylated on a His residue during the reaction cycle. Phosphorylation strongly increases the affinity for substrates and increases the rate of nicotinate D-ribonucleotide production. Dephosphorylation regenerates the low-affinity form of the enzyme, leading to product release.

The catalysed reaction is nicotinate + 5-phospho-alpha-D-ribose 1-diphosphate + ATP + H2O = nicotinate beta-D-ribonucleotide + ADP + phosphate + diphosphate. It functions in the pathway cofactor biosynthesis; NAD(+) biosynthesis; nicotinate D-ribonucleotide from nicotinate: step 1/1. Its function is as follows. Catalyzes the synthesis of beta-nicotinate D-ribonucleotide from nicotinate and 5-phospho-D-ribose 1-phosphate at the expense of ATP. This Methanosarcina acetivorans (strain ATCC 35395 / DSM 2834 / JCM 12185 / C2A) protein is Nicotinate phosphoribosyltransferase.